Here is a 187-residue protein sequence, read N- to C-terminus: Adenylate kinase (187 aa).

Residue 10–15 (GSGKGT) participates in ATP binding. Residues 30 to 59 (STGDLLRAEVAAGSPLGLKAKEVMARGDLV) form an NMP region. AMP is bound by residues T31, R36, 57–59 (DLV), 85–88 (GYPR), and Q92. Residues 126–136 (GRAKAEGREDD) form an LID region. An ATP-binding site is contributed by R127. AMP-binding residues include R133 and R144. Position 172 (G172) interacts with ATP.

It belongs to the adenylate kinase family. As to quaternary structure, monomer.

It localises to the cytoplasm. It carries out the reaction AMP + ATP = 2 ADP. The protein operates within purine metabolism; AMP biosynthesis via salvage pathway; AMP from ADP: step 1/1. Its function is as follows. Catalyzes the reversible transfer of the terminal phosphate group between ATP and AMP. Plays an important role in cellular energy homeostasis and in adenine nucleotide metabolism. The protein is Adenylate kinase of Xanthomonas campestris pv. campestris (strain 8004).